We begin with the raw amino-acid sequence, 318 residues long: Small ribosomal subunit biogenesis GTPase RsgA (318 aa).

The span at 1–16 shows a compositional bias: basic residues; it reads MTRGKPGRAGHDRRHA. A disordered region spans residues 1–21; the sequence is MTRGKPGRAGHDRRHASTGEH. In terms of domain architecture, CP-type G spans 84 to 249; it reads SDQFKSKQLA…LIDSPGFQEF (166 aa). Residues 133–136 and 187–195 contribute to the GTP site; these read NKID and GQSGMGKSS. Zn(2+) is bound by residues cysteine 273, cysteine 278, histidine 280, and cysteine 286.

This sequence belongs to the TRAFAC class YlqF/YawG GTPase family. RsgA subfamily. In terms of assembly, monomer. Associates with 30S ribosomal subunit, binds 16S rRNA. Requires Zn(2+) as cofactor.

The protein localises to the cytoplasm. Its function is as follows. One of several proteins that assist in the late maturation steps of the functional core of the 30S ribosomal subunit. Helps release RbfA from mature subunits. May play a role in the assembly of ribosomal proteins into the subunit. Circularly permuted GTPase that catalyzes slow GTP hydrolysis, GTPase activity is stimulated by the 30S ribosomal subunit. The chain is Small ribosomal subunit biogenesis GTPase RsgA from Ralstonia nicotianae (strain ATCC BAA-1114 / GMI1000) (Ralstonia solanacearum).